Reading from the N-terminus, the 125-residue chain is Large ribosomal subunit protein bL20 (125 aa).

It belongs to the bacterial ribosomal protein bL20 family.

In terms of biological role, binds directly to 23S ribosomal RNA and is necessary for the in vitro assembly process of the 50S ribosomal subunit. It is not involved in the protein synthesizing functions of that subunit. This Rhizorhabdus wittichii (strain DSM 6014 / CCUG 31198 / JCM 15750 / NBRC 105917 / EY 4224 / RW1) (Sphingomonas wittichii) protein is Large ribosomal subunit protein bL20.